A 1038-amino-acid polypeptide reads, in one-letter code: Importin-7 (1038 aa).

Met-1 is subject to N-acetylmethionine. One can recognise an Importin N-terminal domain in the interval 22–101; sequence AERQLNEAHK…RENIVEAIIH (80 aa). Residues 881–910 form a disordered region; the sequence is EHENDSDDDEDAEDDDETEELGSDEDDIDE. The span at 884–910 shows a compositional bias: acidic residues; it reads NDSDDDEDAEDDDETEELGSDEDDIDE. The residue at position 886 (Ser-886) is a Phosphoserine. At Thr-898 the chain carries Phosphothreonine. 2 positions are modified to phosphoserine: Ser-903 and Ser-1020.

It belongs to the importin beta family. In terms of assembly, forms a heterodimer with KPNB1. Interacts with histone H1. Interacts with H2A, H2B, H3 and H4 histones. Interacts with SNUPN and XPO1. Interacts with RPS7 and RPL5. Interacts with RPL23A (via BIB domain). Binds directly to nuclear pore complexes. Interacts with SMAD4 and NUP93; translocates SMAD4 to the nucleus through the NPC upon BMP7 stimulation resulting in activation of SMAD4 signaling. Interacts with phosphorylated SMAD2; the interaction facilitates translocation of SMAD2 to the nucleus. Interacts with SRP19. Interacts with RUNX2; the interaction inhibits RUNX2 nuclear translocation in osteoblasts. Interacts with HDAC6, DLX3 and KLF4; the interaction facilitates HDAC6, DLX3 and KLF4 nuclear translocation in dental papilla cells.

It localises to the cytoplasm. It is found in the nucleus. Functionally, functions in nuclear protein import, either by acting as autonomous nuclear transport receptor or as an adapter-like protein in association with the importin-beta subunit KPNB1. Acting autonomously is thought to serve itself as receptor for nuclear localization signals (NLS) and to promote translocation of import substrates through the nuclear pore complex (NPC) by an energy requiring, Ran-dependent mechanism. At the nucleoplasmic side of the NPC, Ran binds to importin, the importin/substrate complex dissociates and importin is re-exported from the nucleus to the cytoplasm where GTP hydrolysis releases Ran. Mediates autonomously the nuclear import of ribosomal proteins RPL23A, RPS7 and RPL5. In association with KPNB1 mediates the nuclear import of H1 histone and the Ran-binding site of IPO7 is not required but synergizes with that of KPNB1 in importin/substrate complex dissociation. Promotes odontoblast differentiation via promoting nuclear translocation of DLX3, KLF4, SMAD2, thereby facilitating the transcription of target genes that play a role in odontoblast differentiation. Facilitates BMP4-induced translocation of SMAD1 to the nucleus and recruitment to the MSX1 gene promoter, thereby promotes the expression of the odontogenic regulator MSX1 in dental mesenchymal cells. Also promotes odontoblast differentiation by facilitating the nuclear translocation of HDAC6 and subsequent repression of RUNX2 expression. Inhibits osteoblast differentiation by inhibiting nuclear translocation of RUNX2 and therefore inhibition of RUNX2 target gene transcription. In vitro, mediates nuclear import of H2A, H2B, H3 and H4 histones. The sequence is that of Importin-7 (Ipo7) from Mus musculus (Mouse).